A 79-amino-acid polypeptide reads, in one-letter code: uncharacterized protein (79 aa).

Residues 20 to 52 are disordered; sequence TERGAGLSPAAPPDPSPAIAPTMAEGGVPSPGP.

This is an uncharacterized protein from Homo sapiens (Human).